Here is a 356-residue protein sequence, read N- to C-terminus: Histidinol-phosphate aminotransferase (356 aa).

Lysine 214 carries the N6-(pyridoxal phosphate)lysine modification.

This sequence belongs to the class-II pyridoxal-phosphate-dependent aminotransferase family. Histidinol-phosphate aminotransferase subfamily. As to quaternary structure, homodimer. Pyridoxal 5'-phosphate serves as cofactor.

It carries out the reaction L-histidinol phosphate + 2-oxoglutarate = 3-(imidazol-4-yl)-2-oxopropyl phosphate + L-glutamate. The protein operates within amino-acid biosynthesis; L-histidine biosynthesis; L-histidine from 5-phospho-alpha-D-ribose 1-diphosphate: step 7/9. This chain is Histidinol-phosphate aminotransferase (hisC), found in Escherichia coli O157:H7.